A 198-amino-acid chain; its full sequence is MERTLQSVVGRRRGSSNRGRGKNSLISTPSYALHPPPRFRYPRWEFVRQTEYSMTACVRKGKLVLTYQYAIWKRVWTIETGFTDPSLFMTPAGTHTTEEIGHLDLFWLRYCSCPHEMPPWLDFLRGTLNLRISCRRALQASVLTSTPRHSLQRLAALQLCTNACLCWYPLGRINDTTPLWLNFSSGKEPTIQQLSGHP.

The tract at residues 1–31 (MERTLQSVVGRRRGSSNRGRGKNSLISTPSY) is disordered. Basic residues predominate over residues 10-21 (GRRRGSSNRGRG).

It is found in the host cytoplasm. The protein resides in the virion. Functionally, determines virus infectivity. The protein is Virion infectivity factor (vif) of Bovine immunodeficiency virus (strain R29) (BIV).